Here is a 466-residue protein sequence, read N- to C-terminus: GTPase Der (466 aa).

EngA-type G domains are found at residues 30–193 (PVVA…PEVS) and 203–376 (RRVA…ASWD). GTP contacts are provided by residues 36-43 (GRPNVGKS), 83-87 (DTGGW), 145-148 (NKVD), 209-216 (GKPNVGKS), 256-260 (DTAGL), and 321-324 (NKWD). The KH-like domain maps to 377-459 (TRIATGPLNS…PIRINVRVRE (83 aa)).

This sequence belongs to the TRAFAC class TrmE-Era-EngA-EngB-Septin-like GTPase superfamily. EngA (Der) GTPase family. Associates with the 50S ribosomal subunit.

Its function is as follows. GTPase that plays an essential role in the late steps of ribosome biogenesis. The polypeptide is GTPase Der (Mycolicibacterium paratuberculosis (strain ATCC BAA-968 / K-10) (Mycobacterium paratuberculosis)).